We begin with the raw amino-acid sequence, 525 residues long: MKLTLWTYEGPPHVGAMRVATAMKDLQLVLHGPQGDTYADLLFTMIERRNARPPVSFSTFEASHMGTDTAILLKDALAAAHARYKPQAMAVALTCTAELLQDDPNGISRALNLPVPVVPLELPSYSRKENYGADETFRALVRALAVPMERTPEVTCNLLGATALGFRHRDDVAEVTKLLATMGIKVNVCAPLGASPDDLRKLGQAHFNVLMYPETGESAARHLERACKQPFTKIVPIGVGATRDFLAEVSKITGLPVVTDESTLRQPWWSASVDSTYLTGKRVFIFGDGTHVIAAARIAAKEVGFEVVGMGCYNREMARPLRTAAAEYGLEALITDDYLEVEKAIEAAAPELILGTQMERNIAKKLGLPCAVISAPVHVQDFPARYAPQMGFEGANVLFDTWVHPLVMGLEEHLLTMFREDFEFHDAAGASHHGGKAVAREESPVAPADLAPAATSDTPAAPSPVVVTQASGEIRWMPEAERELRKIPFFVRGKAKRNTELYAAHKGVCDITVETLYEAKAHYAR.

Asp36 is a [4Fe-4S] cluster binding site. Asp274 functions as the Proton donor in the catalytic mechanism. 409 to 410 provides a ligand contact to substrate; sequence GL. The tract at residues 433-464 is disordered; sequence HGGKAVAREESPVAPADLAPAATSDTPAAPSP. Low complexity predominate over residues 444–464; the sequence is PVAPADLAPAATSDTPAAPSP.

Belongs to the ChlB/BchB/BchZ family. In terms of assembly, protochlorophyllide reductase is composed of three subunits; BchL, BchN and BchB. Forms a heterotetramer of two BchB and two BchN subunits. Requires [4Fe-4S] cluster as cofactor.

It carries out the reaction chlorophyllide a + oxidized 2[4Fe-4S]-[ferredoxin] + 2 ADP + 2 phosphate = protochlorophyllide a + reduced 2[4Fe-4S]-[ferredoxin] + 2 ATP + 2 H2O. The protein operates within porphyrin-containing compound metabolism; bacteriochlorophyll biosynthesis (light-independent). Its function is as follows. Component of the dark-operative protochlorophyllide reductase (DPOR) that uses Mg-ATP and reduced ferredoxin to reduce ring D of protochlorophyllide (Pchlide) to form chlorophyllide a (Chlide). This reaction is light-independent. The NB-protein (BchN-BchB) is the catalytic component of the complex. This is Light-independent protochlorophyllide reductase subunit B from Rhodobacter capsulatus (strain ATCC BAA-309 / NBRC 16581 / SB1003).